The following is a 277-amino-acid chain: MAVVTMKQLLDSGAHFGHQTRRWNPKMKRFIFTDRNGIYIIDLQQTLTYIDKAYEFVKETVAHGGSVMFVGTKKQAQEPIAEEATRVGMPYVNQRWLGGMLTNFSTVHKRLQRLKELESMEQTGGFEGRTKKEILMLTREKNKLERSLGGIRDMQKVPSAIFVVDTNKEHLAVAEARKLNIPIIAILDTNCDPDVVDYPIPGNDDAIRSAALLTKVVASAIAEGLQARSGLAGGDEKPEAGEPLAEWEQELLASAVATTDEASAPSAAATETTTEEG.

The segment at 255–277 (AVATTDEASAPSAAATETTTEEG) is disordered. Residues 257 to 277 (ATTDEASAPSAAATETTTEEG) show a composition bias toward low complexity.

It belongs to the universal ribosomal protein uS2 family.

The sequence is that of Small ribosomal subunit protein uS2 from Mycobacteroides abscessus (strain ATCC 19977 / DSM 44196 / CCUG 20993 / CIP 104536 / JCM 13569 / NCTC 13031 / TMC 1543 / L948) (Mycobacterium abscessus).